Reading from the N-terminus, the 141-residue chain is MLLPKRTKYRKMMKGRNRGYATRGVDLALGEFGLKAVEAGRVNSRQIESARQAYTRHVKRQAKTWIRVFPDKPITKKPLETRMGKGKGGVEEWVMNIKPGRIIFEMSGVSEELAREALTLAMHKLPFKTKFVTKESENEVY.

The protein belongs to the universal ribosomal protein uL16 family. As to quaternary structure, part of the 50S ribosomal subunit.

Functionally, binds 23S rRNA and is also seen to make contacts with the A and possibly P site tRNAs. This is Large ribosomal subunit protein uL16 from Campylobacter fetus subsp. fetus (strain 82-40).